Reading from the N-terminus, the 274-residue chain is Ribosomal RNA small subunit methyltransferase A (274 aa).

Residues Asn28, Leu30, Gly55, Glu77, Asp103, and Asn122 each coordinate S-adenosyl-L-methionine.

The protein belongs to the class I-like SAM-binding methyltransferase superfamily. rRNA adenine N(6)-methyltransferase family. RsmA subfamily.

The protein resides in the cytoplasm. The enzyme catalyses adenosine(1518)/adenosine(1519) in 16S rRNA + 4 S-adenosyl-L-methionine = N(6)-dimethyladenosine(1518)/N(6)-dimethyladenosine(1519) in 16S rRNA + 4 S-adenosyl-L-homocysteine + 4 H(+). Its function is as follows. Specifically dimethylates two adjacent adenosines (A1518 and A1519) in the loop of a conserved hairpin near the 3'-end of 16S rRNA in the 30S particle. May play a critical role in biogenesis of 30S subunits. In Sinorhizobium medicae (strain WSM419) (Ensifer medicae), this protein is Ribosomal RNA small subunit methyltransferase A.